A 242-amino-acid chain; its full sequence is Orotidine 5'-phosphate decarboxylase (242 aa).

Residues D21, K43, D71–T80, T124, R185, Q195, G215, and R216 each bind substrate. K73 acts as the Proton donor in catalysis.

It belongs to the OMP decarboxylase family. Type 1 subfamily. Homodimer.

The enzyme catalyses orotidine 5'-phosphate + H(+) = UMP + CO2. It functions in the pathway pyrimidine metabolism; UMP biosynthesis via de novo pathway; UMP from orotate: step 2/2. In terms of biological role, catalyzes the decarboxylation of orotidine 5'-monophosphate (OMP) to uridine 5'-monophosphate (UMP). The protein is Orotidine 5'-phosphate decarboxylase of Methylococcus capsulatus (strain ATCC 33009 / NCIMB 11132 / Bath).